Consider the following 197-residue polypeptide: Syndecan-4 (197 aa).

The N-terminal stretch at methionine 1–alanine 19 is a signal peptide. Residues glutamate 20–threonine 147 lie on the Extracellular side of the membrane. O-linked (Xyl...) (glycosaminoglycan) serine glycosylation is found at serine 38, serine 65, and serine 67. Asparagine 124 and asparagine 136 each carry an N-linked (GlcNAc...) asparagine glycan. A helical membrane pass occupies residues alanine 148 to valine 168. At tyrosine 169 to alanine 197 the chain is on the cytoplasmic side.

This sequence belongs to the syndecan proteoglycan family. As to quaternary structure, interacts with SDOS. O-glycosylated; contains both chondroitin sulfate and heparan sulfate. Ser-38, Ser-65 and Ser-67 can all be modified by either chondroitin sulfate or heparan sulfate, and the protein exists in forms that contain only chondroitin sulfate, only heparan sulfate and both chondroitin sulfate and heparan sulfate.

It localises to the membrane. Cell surface proteoglycan which regulates exosome biogenesis in concert with SDCBP and PDCD6IP. This chain is Syndecan-4 (SDC4), found in Gallus gallus (Chicken).